The primary structure comprises 117 residues: Large ribosomal subunit protein uL18 (117 aa).

Belongs to the universal ribosomal protein uL18 family. In terms of assembly, part of the 50S ribosomal subunit; part of the 5S rRNA/L5/L18/L25 subcomplex. Contacts the 5S and 23S rRNAs.

Functionally, this is one of the proteins that bind and probably mediate the attachment of the 5S RNA into the large ribosomal subunit, where it forms part of the central protuberance. The polypeptide is Large ribosomal subunit protein uL18 (Aster yellows witches'-broom phytoplasma (strain AYWB)).